Reading from the N-terminus, the 56-residue chain is Conotoxin Bu12 (56 aa).

The first 2 residues, 1 to 2, serve as a signal peptide directing secretion; sequence TA. The propeptide occupies 3 to 25; it reads EDSRGTQLHRALRKATKLPVSTR. Intrachain disulfides connect Cys-26–Cys-40, Cys-33–Cys-44, and Cys-39–Cys-49.

The protein belongs to the conotoxin O1 superfamily. In terms of tissue distribution, expressed by the venom duct.

Its subcellular location is the secreted. The polypeptide is Conotoxin Bu12 (Conus bullatus (Bubble cone)).